We begin with the raw amino-acid sequence, 59 residues long: Metallothionein-1B (59 aa).

Residues 1–29 are beta; the sequence is MPGPCCNDKCVCQEGGCKAGCQCTSCRCS. Cysteine 5, cysteine 6, cysteine 10, cysteine 17, cysteine 21, cysteine 23, cysteine 26, cysteine 28, cysteine 31, cysteine 34, cysteine 38, cysteine 40, cysteine 46, cysteine 50, cysteine 54, cysteine 56, and cysteine 57 together coordinate a divalent metal cation. An alpha region spans residues 30 to 59; the sequence is PCQKCTSGCKCATKEECSKTCTKPCSCCPK.

Belongs to the metallothionein superfamily. Type 3 family.

In terms of biological role, binds six divalent metal ions. Known to bind copper and cadmium. The protein is Metallothionein-1B of Callinectes sapidus (Blue crab).